Consider the following 201-residue polypeptide: NADH-ubiquinone oxidoreductase chain 6 (201 aa).

Transmembrane regions (helical) follow at residues 4-24, 28-48, 55-75, 88-108, and 151-171; these read LVLF…VISV, VFSV…LLLL, LLFL…VVMI, FYYA…IFII, and LFIL…ILTL.

Belongs to the complex I subunit 6 family.

It is found in the mitochondrion membrane. The catalysed reaction is a ubiquinone + NADH + 5 H(+)(in) = a ubiquinol + NAD(+) + 4 H(+)(out). In terms of biological role, core subunit of the mitochondrial membrane respiratory chain NADH dehydrogenase (Complex I) that is believed to belong to the minimal assembly required for catalysis. Complex I functions in the transfer of electrons from NADH to the respiratory chain. The immediate electron acceptor for the enzyme is believed to be ubiquinone. The protein is NADH-ubiquinone oxidoreductase chain 6 (ND6) of Cyanidium caldarium (Red alga).